The following is a 434-amino-acid chain: MNIIVVGLSHKTATVEIREKVAFAPTQMEKPLHALVSLPDITEAVIVSTCNRVEIYATTRDIAGGVARLKRFLADYHNISLETLEPHLYSYHGEAATRHVFRVASSLDSMVVGEPQILGQIKTSYGYAAEYKSSGIILNRFLHKAFSVAKRVRTETKIASSAVSVAFAAVELAKKIFGDLSDKTVMLIGAGEMCELAAKHFINTGVRGVMVTNRTFERAVKLAEEFDGKAVNYEELFDHLHKADIVLSSTGAPHFIIGPKNVEEVIRRRKMKPMFFIDIAVPRDIDPKVNDVENIYLYTVDDLNGVVATNLEQRNKEAEKAEAIVEQEIGQFFKWLSSLEVTPTIVALRSKFDEIRRAELAKTLANWKELPPDAEKRLEALTSAIMNKLLHQPTSVLKRAEQGNRNDLYIDALRNLFELETTRPEVEELGELEE.

Residues 49–52 (TCNR), Ser-109, 114–116 (EPQ), and Gln-120 contribute to the substrate site. Cys-50 serves as the catalytic Nucleophile. Residue 189 to 194 (GAGEMC) coordinates NADP(+).

This sequence belongs to the glutamyl-tRNA reductase family. Homodimer.

The enzyme catalyses (S)-4-amino-5-oxopentanoate + tRNA(Glu) + NADP(+) = L-glutamyl-tRNA(Glu) + NADPH + H(+). It functions in the pathway porphyrin-containing compound metabolism; protoporphyrin-IX biosynthesis; 5-aminolevulinate from L-glutamyl-tRNA(Glu): step 1/2. Catalyzes the NADPH-dependent reduction of glutamyl-tRNA(Glu) to glutamate 1-semialdehyde (GSA). The polypeptide is Glutamyl-tRNA reductase (Geotalea uraniireducens (strain Rf4) (Geobacter uraniireducens)).